The sequence spans 2531 residues: Talin (2531 aa).

Residues 87 to 401 (RPLRVRMMDE…GYIDIILKKK (315 aa)) form the FERM domain. An interaction with VIN1 region spans residues 598-621 (GEKLLEAARGLAGAVRHLLKSAEP). In terms of domain architecture, I/LWEQ spans 2287 to 2526 (TDWVDPSDPN…KIRHDKYKRH (240 aa)). A disordered region spans residues 2466–2485 (AAKRSSEEGDDEEVSGGGQE).

As to quaternary structure, interacts with VIN1 (vinculin); the interaction facilitates VIN1 binding to F-actin.

The protein resides in the cytoplasm. It is found in the cytoskeleton. It localises to the cell cortex. Probably involved in connections of major cytoskeletal structures to the plasma membrane. This Oscarella pearsei (Sponge) protein is Talin.